Consider the following 396-residue polypeptide: Elongation factor Tu 2 (396 aa).

A tr-type G domain is found at 10 to 206 (KPHVNVGTIG…ALDTYIPTPE (197 aa)). A G1 region spans residues 19–26 (GHVDHGKT). Residue 19 to 26 (GHVDHGKT) participates in GTP binding. Residue threonine 26 participates in Mg(2+) binding. Positions 60–64 (GITIN) are G2. Positions 81–84 (DCPG) are G3. Residues 81–85 (DCPGH) and 136–139 (NKCD) contribute to the GTP site. Residues 136-139 (NKCD) are G4. The segment at 174 to 176 (SAK) is G5.

Belongs to the TRAFAC class translation factor GTPase superfamily. Classic translation factor GTPase family. EF-Tu/EF-1A subfamily. In terms of assembly, monomer.

It is found in the cytoplasm. It carries out the reaction GTP + H2O = GDP + phosphate + H(+). Functionally, GTP hydrolase that promotes the GTP-dependent binding of aminoacyl-tRNA to the A-site of ribosomes during protein biosynthesis. The chain is Elongation factor Tu 2 from Acidovorax sp. (strain JS42).